A 239-amino-acid chain; its full sequence is Probable 2-phosphosulfolactate phosphatase (239 aa).

The protein belongs to the ComB family. Mg(2+) is required as a cofactor.

It catalyses the reaction (2R)-O-phospho-3-sulfolactate + H2O = (2R)-3-sulfolactate + phosphate. The sequence is that of Probable 2-phosphosulfolactate phosphatase from Clostridium botulinum (strain Langeland / NCTC 10281 / Type F).